Consider the following 440-residue polypeptide: GTPase Obg (440 aa).

The region spanning 5–163 is the Obg domain; it reads STFVDQTKIE…RTLRLELKVL (159 aa). The OBG-type G domain occupies 164–338; the sequence is ADVGLVGFPS…LMSRAADLVS (175 aa). GTP contacts are provided by residues 170–177, 195–199, 217–220, 288–291, and 319–321; these read GFPSVGKS, FTTLK, DLPG, SQMD, and SSV. Positions 177 and 197 each coordinate Mg(2+). The region spanning 362–440 is the OCT domain; that stretch reads YHRPEKMEFT…IGDFSFEFVQ (79 aa).

The protein belongs to the TRAFAC class OBG-HflX-like GTPase superfamily. OBG GTPase family. Monomer. It depends on Mg(2+) as a cofactor.

It localises to the cytoplasm. Functionally, an essential GTPase which binds GTP, GDP and possibly (p)ppGpp with moderate affinity, with high nucleotide exchange rates and a fairly low GTP hydrolysis rate. Plays a role in control of the cell cycle, stress response, ribosome biogenesis and in those bacteria that undergo differentiation, in morphogenesis control. In Lactobacillus delbrueckii subsp. bulgaricus (strain ATCC 11842 / DSM 20081 / BCRC 10696 / JCM 1002 / NBRC 13953 / NCIMB 11778 / NCTC 12712 / WDCM 00102 / Lb 14), this protein is GTPase Obg.